The primary structure comprises 206 residues: Ribosomal RNA small subunit methyltransferase G (206 aa).

Residues G73, L78, 124–125, and R139 contribute to the S-adenosyl-L-methionine site; that span reads VE.

It belongs to the methyltransferase superfamily. RNA methyltransferase RsmG family.

It is found in the cytoplasm. It catalyses the reaction guanosine(527) in 16S rRNA + S-adenosyl-L-methionine = N(7)-methylguanosine(527) in 16S rRNA + S-adenosyl-L-homocysteine. Its function is as follows. Specifically methylates the N7 position of guanine in position 527 of 16S rRNA. This Yersinia pseudotuberculosis serotype O:3 (strain YPIII) protein is Ribosomal RNA small subunit methyltransferase G.